We begin with the raw amino-acid sequence, 219 residues long: Maleylacetoacetate isomerase (219 aa).

Positions 4-87 (NKTVLYSYWR…YLEETHPENP (84 aa)) constitute a GST N-terminal domain. Glutathione contacts are provided by residues 14-19 (SSCSWR), Gln45, 71-72 (QS), Gln111, and 115-117 (NLK). A GST C-terminal domain is found at 92-217 (GSYERAIARQ…LPQNQPDAEP (126 aa)).

It belongs to the GST superfamily. Zeta family. It depends on glutathione as a cofactor.

The catalysed reaction is 4-maleylacetoacetate = 4-fumarylacetoacetate. It participates in amino-acid degradation; L-phenylalanine degradation; acetoacetate and fumarate from L-phenylalanine: step 5/6. This Dictyostelium discoideum (Social amoeba) protein is Maleylacetoacetate isomerase (mai).